Consider the following 1333-residue polypeptide: DNA-directed RNA polymerase subunit beta' (1333 aa).

Zn(2+)-binding residues include cysteine 60, cysteine 62, cysteine 75, and cysteine 78. Mg(2+)-binding residues include aspartate 535, aspartate 537, and aspartate 539. Residues cysteine 901, cysteine 983, cysteine 990, and cysteine 993 each coordinate Zn(2+).

This sequence belongs to the RNA polymerase beta' chain family. In terms of assembly, the RNAP catalytic core consists of 2 alpha, 1 beta, 1 beta' and 1 omega subunit. When a sigma factor is associated with the core the holoenzyme is formed, which can initiate transcription. It depends on Mg(2+) as a cofactor. Zn(2+) is required as a cofactor.

It carries out the reaction RNA(n) + a ribonucleoside 5'-triphosphate = RNA(n+1) + diphosphate. Functionally, DNA-dependent RNA polymerase catalyzes the transcription of DNA into RNA using the four ribonucleoside triphosphates as substrates. This is DNA-directed RNA polymerase subunit beta' from Corynebacterium glutamicum (strain ATCC 13032 / DSM 20300 / JCM 1318 / BCRC 11384 / CCUG 27702 / LMG 3730 / NBRC 12168 / NCIMB 10025 / NRRL B-2784 / 534).